The primary structure comprises 436 residues: Gamma-glutamyl phosphate reductase (436 aa).

It belongs to the gamma-glutamyl phosphate reductase family.

It localises to the cytoplasm. It carries out the reaction L-glutamate 5-semialdehyde + phosphate + NADP(+) = L-glutamyl 5-phosphate + NADPH + H(+). It functions in the pathway amino-acid biosynthesis; L-proline biosynthesis; L-glutamate 5-semialdehyde from L-glutamate: step 2/2. In terms of biological role, catalyzes the NADPH-dependent reduction of L-glutamate 5-phosphate into L-glutamate 5-semialdehyde and phosphate. The product spontaneously undergoes cyclization to form 1-pyrroline-5-carboxylate. The polypeptide is Gamma-glutamyl phosphate reductase (Prochlorococcus marinus (strain AS9601)).